The following is a 463-amino-acid chain: FAD-dependent monooxygenase str9 (463 aa).

Residues Glu-37, Gly-50, and Arg-114 each contribute to the FAD site. Arg-200 is a catalytic residue. Asp-334 contacts FAD.

Belongs to the paxM FAD-dependent monooxygenase family.

The protein operates within mycotoxin biosynthesis. Functionally, FAD-dependent monooxygenase; part of the gene cluster that mediates the biosynthesis of strobilurin A, an antifungal polyketide that contains a key beta-methoxyacrylate toxophore that targets the complex III of the mitochondrial electron transport chain. Strobilurin biosynthesis begins with construction of benzoyl CoA by step-wise elimination of ammonia from phenylalanine by the phenylalanine ammonia-lyase str11, oxygenation by str8 and retro-Claisen reaction to form benzoic acid, which is activated to its CoA thiolester benzoyl CoA by the dedicated CoA ligase str10. Benzoyl CoA forms the starter unit for the highly reducing polyketide synthase stpks1 that produces the polyketide prestrobilutin A. The FAD-dependent oxygenase str9 then catalyzes the key oxidative rearrangement responsible for the creation of the beta-methoxyacrylate toxophore. Str9 performs epoxidation of the 2,3 olefin of prestrobilutin A, followed by Meinwald rearrangement to furnish the aldehyde intermediate. Rapid enolization of the aldehyde intermediate would give the beta-methoxyacrylate skeleton and methylations catalyzed by str2 and str3 complete the synthesis and lead to the production of strobilurin A. The short-chain dehydrogenase stl2 and the dehydrogenase str4 play a role in the shunt pathway leading to the production of bolineol. The cluster encodes no obvious halogenase gene that could be involved in production of strobilurin B, nor any obvious dimethylallyl-transferase that could be involved in the production of strobilurin G. It is possible that unknown proteins encoded in, or near, the cluster (such as str1 or stl1) may form new classes of halogenases or dimethylally-transferases, or that the responsible genes are located elsewhere on the genome. Similarly, proteins encoded by str5/str6 hydrolases appear to have no chemical role in the biosynthesis of strobilurin A. Finally, no obvious self-resistance gene is found within the cluster. The chain is FAD-dependent monooxygenase str9 from Strobilurus tenacellus.